Consider the following 1201-residue polypeptide: MRLLITLGPSGSTHGHSLHTDAGRRRGGRPFAQVVDELRAGQRVRTQGLKGAARGHVLARLHGALRAPLVCVAVDEEAADALAADLSFFLGGQGSLLAPRVLRLPADEVLPYDEVSPDAAAVTERLGALFHLGQGTRFPALVLSVRALHRKVLPLAVMRALAARVAVGQDFDRDSLARRLVRMGYQNSPLVEDVGTFSVRGDLLDVFSPLYDKPVRLEFFGDTIESIRAFDPQSQRTVDALKEVDLVPAREVLLTDETRPRAESAARAVADRINLPTIKLREQLDALREGLPGFGMEGLLPGFFEDGLSTVFDFLRDWSPEAPVIYLDDPLGQDRAADTLWEELERSHGAAEARQELICPPLEHFLSREDVNQRMQSFRVLEGGGLSLAQTERPPVHFSFGGTQDLREAILAHHGEEGALSPLVERLERWRELRVACVVACGTLSQADRLKRLLMDRNVMVKVHTEPLEDAVALYEPSIRAHLFTGEVSHGFVDGPGGLAVLADEEIFGARARRRPKRSKKLDAFGSGFGDLKEGDLIVHTDFGIGRYAGLTKMEVNGVPGDFLVLEYAGRDKIYLPVGRMRLIQKFSGGDPTQVQLDKLGTTSWEKTKKRVKEQLLKMAAELLQIAAARKAHPGHAFSAPDRYFAQFEADFEFEETPDQAKAIEDVLADMQKPEPMDRLVCGDVGYGKTEVAMRAAFKAALDRKQVAVLVPTTVLAQQHFLSFKKRFADYPVTVEVISGLKKAPEVREILKRAKEGKVDILIGTHKLLGGEVAFKELGLMIVDEEQRFGVKQKESLKKWRSQIDVLTLTATPIPRTLHMSMSGVRDMSIIATPPQDRRAIRTFVMKYEDTVVKEAIEREVARGGQVFFVHNRVESLPSIETQLRALVPQVSIGVAHGQMGEGQLEKVMLAFTEKKYQVLLCTSIIESGIDISSANTMIVNRADQFGLAQLYQLRGRVGRSKERAYAYLLVPSRRAVTKDAQRRLEVLQNFTELGAGFSIASHDLEIRGAGNLLGDKQSGAIAEIGFDMYAQLLEEAVAEMQGQPPKVQIEPDVTLPMPALIPDDYVSDVHQRLVFYKRFSQASHPDEVTDLRAELVDRYGEAPDEVDHLSELTLLKIDMRDLRLRGLEVGTTRLVVTLGADALLDGPKVAGLVQRSKGVYRLTPDMKLIARAPQGASGQDLISEAKKVLRDLSHCALPQA.

Positions 1 to 27 are disordered; it reads MRLLITLGPSGSTHGHSLHTDAGRRRG. In terms of domain architecture, Helicase ATP-binding spans 670–831; it reads DMQKPEPMDR…MSGVRDMSII (162 aa). Residue 683–690 participates in ATP binding; it reads GDVGYGKT. Residues 784-787 carry the DEEQ box motif; sequence DEEQ. Positions 852–1006 constitute a Helicase C-terminal domain; the sequence is VVKEAIEREV…GFSIASHDLE (155 aa).

It in the N-terminal section; belongs to the UvrB family. The protein in the C-terminal section; belongs to the helicase family. RecG subfamily.

It is found in the cytoplasm. In terms of biological role, couples transcription and DNA repair by recognizing RNA polymerase (RNAP) stalled at DNA lesions. Mediates ATP-dependent release of RNAP and its truncated transcript from the DNA, and recruitment of nucleotide excision repair machinery to the damaged site. The protein is Transcription-repair-coupling factor of Myxococcus xanthus.